A 514-amino-acid polypeptide reads, in one-letter code: Acetylcholine receptor subunit gamma (514 aa).

A signal peptide spans 1-22 (MRCSDLLLLFLLALCVLPGISC). Residues 23-241 (RNQEEKLLQD…VIFYLIIQRK (219 aa)) are Extracellular-facing. Cysteines 150 and 164 form a disulfide. An N-linked (GlcNAc...) asparagine glycan is attached at asparagine 163. The next 3 membrane-spanning stretches (helical) occupy residues 242–266 (PLFY…VYFL), 275–293 (CTVS…FLIA), and 309–330 (YLTF…VLNV). Residues 331–473 (SLRTPNTHSM…WILVGRVIDR (143 aa)) lie on the Cytoplasmic side of the membrane. Tyrosine 386 is subject to Phosphotyrosine; by Tyr-kinases. Residues 474 to 494 (VCFFIMASLFVCGTIGIFLMA) form a helical membrane-spanning segment.

Belongs to the ligand-gated ion channel (TC 1.A.9) family. Acetylcholine receptor (TC 1.A.9.1) subfamily. Gamma/CHRNG sub-subfamily. In terms of assembly, pentamer of two alpha chains, and one each of the beta, delta, and gamma chains.

The protein resides in the postsynaptic cell membrane. The protein localises to the cell membrane. The catalysed reaction is K(+)(in) = K(+)(out). It catalyses the reaction Na(+)(in) = Na(+)(out). In terms of biological role, after binding acetylcholine, the AChR responds by an extensive change in conformation that affects all subunits and leads to opening of an ion-conducting channel across the plasma membrane. In Gallus gallus (Chicken), this protein is Acetylcholine receptor subunit gamma (CHRNG).